Here is a 273-residue protein sequence, read N- to C-terminus: uncharacterized protein (273 aa).

Positions 1–21 (MKILRWLFALVMLIATTEAMA) are cleaved as a signal peptide.

The protein to S.typhimurium YadU.

Functionally, part of the yfcOPQRSUV fimbrial operon. Could contribute to adhesion to various surfaces in specific environmental niches. Increases adhesion to eukaryotic T24 bladder epithelial cells in the absence of fim genes. This is an uncharacterized protein from Escherichia coli (strain K12).